We begin with the raw amino-acid sequence, 68 residues long: Small ribosomal subunit protein bS21 (68 aa).

The protein belongs to the bacterial ribosomal protein bS21 family.

This Ruegeria pomeroyi (strain ATCC 700808 / DSM 15171 / DSS-3) (Silicibacter pomeroyi) protein is Small ribosomal subunit protein bS21.